The sequence spans 945 residues: Xylosyltransferase 1 (945 aa).

The Cytoplasmic portion of the chain corresponds to 1–17 (MQAAPCARRLARRSHSA). A helical; Signal-anchor for type II membrane protein transmembrane segment spans residues 18–38 (LLAALTVLLLQTLVVWNFSSL). Over 39–945 (DSGAGERRGG…GAVKPDGRLR (907 aa)) the chain is Lumenal. A disordered region spans residues 42 to 245 (AGERRGGAAV…KYDQPPKCDI (204 aa)). A compositionally biased stretch (gly residues) spans 76–103 (RGGGGGGGGCGGGGRGPQARARGGGPGE). The segment covering 131-147 (KVRTDSNNENSVPKDFE) has biased composition (basic and acidic residues). Residues 149 to 158 (VDNSNFAPRT) show a composition bias toward polar residues. A compositionally biased stretch (basic and acidic residues) spans 163–190 (HQPELAKKPPSRQKELLKRKLEQQEKGK). Residue Asn212 is glycosylated (N-linked (GlcNAc...) asparagine). Basic and acidic residues predominate over residues 235-245 (TKYDQPPKCDI). 4 disulfide bridges follow: Cys243–Cys271, Cys287–Cys528, Cys547–Cys560, and Cys549–Cys558. UDP-alpha-D-xylose contacts are provided by residues Val319, Asp347, and 376-378 (TIW). Asn407 carries N-linked (GlcNAc...) asparagine glycosylation. Position 480-481 (480-481 (DW)) interacts with UDP-alpha-D-xylose. UDP-alpha-D-xylose is bound by residues Ser561 and 584–585 (RK). 2 disulfides stabilise this stretch: Cys661/Cys913 and Cys906/Cys919. Asn763 is a glycosylation site (N-linked (GlcNAc...) asparagine). Residues 926–945 (SFSPDPKSELGAVKPDGRLR) form a disordered region.

This sequence belongs to the glycosyltransferase 14 family. XylT subfamily. In terms of assembly, monomer. A divalent metal cation serves as cofactor. In terms of processing, contains 7 disulfide bonds. N-glycosylated.

It is found in the golgi apparatus membrane. It catalyses the reaction UDP-alpha-D-xylose + L-seryl-[protein] = 3-O-(beta-D-xylosyl)-L-seryl-[protein] + UDP + H(+). It participates in glycan metabolism; chondroitin sulfate biosynthesis. Its pathway is glycan metabolism; heparan sulfate biosynthesis. In terms of biological role, catalyzes the first step in the biosynthesis of chondroitin sulfate and dermatan sulfate proteoglycans, such as DCN. Transfers D-xylose from UDP-D-xylose to specific serine residues of the core protein. Required for normal maturation of chondrocytes during bone development, normal onset of ossification and normal embryonic and postnatal skeleton development, especially of the long bones. This chain is Xylosyltransferase 1 (XYLT1), found in Pan troglodytes (Chimpanzee).